The primary structure comprises 237 residues: DNA repair protein RecO (237 aa).

Belongs to the RecO family.

Functionally, involved in DNA repair and RecF pathway recombination. This Rickettsia rickettsii (strain Iowa) protein is DNA repair protein RecO.